We begin with the raw amino-acid sequence, 185 residues long: Ribosome-recycling factor (185 aa).

This sequence belongs to the RRF family.

The protein resides in the cytoplasm. Responsible for the release of ribosomes from messenger RNA at the termination of protein biosynthesis. May increase the efficiency of translation by recycling ribosomes from one round of translation to another. The protein is Ribosome-recycling factor of Clostridium novyi (strain NT).